The following is a 179-amino-acid chain: Embryo-specific protein ATS3A (179 aa).

Positions 1–22 are cleaved as a signal peptide; the sequence is MLRLAIPLFLFALCSFTLFSSA. The PLAT domain maps to 48 to 158; sequence CSYTVIIKTS…NSVWYGFNVC (111 aa).

Interacts with EULS3 (via N-terminus). Expressed in roots, rosette leaves, stems, cauline leaves and flowers.

The protein resides in the secreted. May play a role during embryo development. The protein is Embryo-specific protein ATS3A of Arabidopsis thaliana (Mouse-ear cress).